The sequence spans 317 residues: UV DNA damage endonuclease (317 aa).

Belongs to the uve1/UvsE family.

Functionally, component in a DNA repair pathway. Removal of UV LIGHT damaged nucleotides. Recognizes pyrimidine dimers and cleave a phosphodiester bond immediately 5' to the lesion. This chain is UV DNA damage endonuclease, found in Bacillus cereus (strain G9842).